The following is a 128-amino-acid chain: uncharacterized protein (128 aa).

This sequence belongs to the HesB/IscA family.

This is an uncharacterized protein from Buchnera aphidicola subsp. Baizongia pistaciae (strain Bp).